A 393-amino-acid chain; its full sequence is Elongation factor Tu (393 aa).

The region spanning 10–203 (KPHVNIGTIG…AVDSFIPDPV (194 aa)) is the tr-type G domain. The tract at residues 19 to 26 (GHVDHGKT) is G1. 19-26 (GHVDHGKT) is a binding site for GTP. T26 is a Mg(2+) binding site. The interval 60-64 (GITIS) is G2. The segment at 81–84 (DCPG) is G3. Residues 81 to 85 (DCPGH) and 136 to 139 (NKVD) contribute to the GTP site. The segment at 136-139 (NKVD) is G4. Positions 173 to 175 (SAL) are G5.

It belongs to the TRAFAC class translation factor GTPase superfamily. Classic translation factor GTPase family. EF-Tu/EF-1A subfamily. In terms of assembly, monomer.

Its subcellular location is the cytoplasm. It carries out the reaction GTP + H2O = GDP + phosphate + H(+). GTP hydrolase that promotes the GTP-dependent binding of aminoacyl-tRNA to the A-site of ribosomes during protein biosynthesis. The polypeptide is Elongation factor Tu (Pelodictyon phaeoclathratiforme (strain DSM 5477 / BU-1)).